A 121-amino-acid polypeptide reads, in one-letter code: Ubiquitin-related modifier 1 (121 aa).

1-thioglycine is present on Gly121. Gly121 participates in a covalent cross-link: Glycyl lysine isopeptide (Gly-Lys) (interchain with K-? in acceptor proteins).

It belongs to the URM1 family. Post-translationally, C-terminal thiocarboxylation occurs in 2 steps, it is first acyl-adenylated (-COAMP) via the hesA/moeB/thiF part of UBA4, then thiocarboxylated (-COSH) via the rhodanese domain of UBA4.

Its subcellular location is the cytoplasm. It functions in the pathway tRNA modification; 5-methoxycarbonylmethyl-2-thiouridine-tRNA biosynthesis. Acts as a sulfur carrier required for 2-thiolation of mcm(5)S(2)U at tRNA wobble positions of cytosolic tRNA(Lys), tRNA(Glu) and tRNA(Gln). Serves as sulfur donor in tRNA 2-thiolation reaction by being thiocarboxylated (-COSH) at its C-terminus by the MOCS3 homolog UBA4. The sulfur is then transferred to tRNA to form 2-thiolation of mcm(5)S(2)U. Prior mcm(5) tRNA modification by the elongator complex is required for 2-thiolation. Also acts as a ubiquitin-like protein (UBL) that is covalently conjugated via an isopeptide bond to lysine residues of target proteins such as AHP1. The thiocarboxylated form serves as substrate for conjugation and oxidative stress specifically induces the formation of UBL-protein conjugates. This chain is Ubiquitin-related modifier 1, found in Ajellomyces capsulatus (strain NAm1 / WU24) (Darling's disease fungus).